The following is a 429-amino-acid chain: Adenylosuccinate synthetase (429 aa).

Residues 12–18 (GDEGKGK) and 40–42 (GHT) each bind GTP. Asp13 functions as the Proton acceptor in the catalytic mechanism. Residues Asp13 and Gly40 each contribute to the Mg(2+) site. IMP is bound by residues 13 to 16 (DEGK), 38 to 41 (NAGH), Thr128, Arg142, Gln223, Thr238, and Arg302. The active-site Proton donor is His41. Substrate is bound at residue 298–304 (VNTGRKR). GTP is bound by residues Arg304, 330–332 (KLD), and 412–414 (GVG).

This sequence belongs to the adenylosuccinate synthetase family. Homodimer. Mg(2+) is required as a cofactor.

Its subcellular location is the cytoplasm. It catalyses the reaction IMP + L-aspartate + GTP = N(6)-(1,2-dicarboxyethyl)-AMP + GDP + phosphate + 2 H(+). It participates in purine metabolism; AMP biosynthesis via de novo pathway; AMP from IMP: step 1/2. Functionally, plays an important role in the de novo pathway of purine nucleotide biosynthesis. Catalyzes the first committed step in the biosynthesis of AMP from IMP. The protein is Adenylosuccinate synthetase of Corynebacterium efficiens (strain DSM 44549 / YS-314 / AJ 12310 / JCM 11189 / NBRC 100395).